Consider the following 373-residue polypeptide: MELNYYEILEISQTSDKETIKKAYRKMALKYHPDRNQGDKEAEEKFKLVNEAYEVLSNDEKRSIYDRYGKEGLKGQAGGFGGFGDVDLGDIFSSFFGDGFGFGSSTRKKEKGNKYPQDLKITTKISFKEAVFGCKKKIDFSYKSFCKSCKGSGSENGKLDTCPHCGGKGQVGVRQGFMTFVQSCDHCKGSGQIIKDKCKTCHGNGYEEIKDHIELDIPEGIDSGMSLRVQNKANELPNSSQRGDLYIKIIVEDDDKFIRHDDDIYTIVPVFFTQAALGKTIKVSTIRGEADLKLPVGAKDKQKFELTNEGVKNIHNGKLGSHIVQIEIKFPKNLTDEQKNLLLQLEKSFGLADEEAFIEQESLFDKIKSWFSH.

Residues 4–69 enclose the J domain; that stretch reads NYYEILEISQ…EKRSIYDRYG (66 aa). A CR-type zinc finger spans residues 133-210; that stretch reads GCKKKIDFSY…CHGNGYEEIK (78 aa). Residues cysteine 146, cysteine 149, cysteine 162, cysteine 165, cysteine 184, cysteine 187, cysteine 198, and cysteine 201 each coordinate Zn(2+). 4 CXXCXGXG motif repeats span residues 146 to 153, 162 to 169, 184 to 191, and 198 to 205; these read CKSCKGSG, CPHCGGKG, CDHCKGSG, and CKTCHGNG.

The protein belongs to the DnaJ family. As to quaternary structure, homodimer. Zn(2+) serves as cofactor.

The protein localises to the cytoplasm. In terms of biological role, participates actively in the response to hyperosmotic and heat shock by preventing the aggregation of stress-denatured proteins and by disaggregating proteins, also in an autonomous, DnaK-independent fashion. Unfolded proteins bind initially to DnaJ; upon interaction with the DnaJ-bound protein, DnaK hydrolyzes its bound ATP, resulting in the formation of a stable complex. GrpE releases ADP from DnaK; ATP binding to DnaK triggers the release of the substrate protein, thus completing the reaction cycle. Several rounds of ATP-dependent interactions between DnaJ, DnaK and GrpE are required for fully efficient folding. Also involved, together with DnaK and GrpE, in the DNA replication of plasmids through activation of initiation proteins. In Campylobacter lari (strain RM2100 / D67 / ATCC BAA-1060), this protein is Chaperone protein DnaJ.